A 466-amino-acid polypeptide reads, in one-letter code: 3-isopropylmalate dehydratase large subunit (466 aa).

[4Fe-4S] cluster is bound by residues cysteine 347, cysteine 407, and cysteine 410.

Belongs to the aconitase/IPM isomerase family. LeuC type 1 subfamily. In terms of assembly, heterodimer of LeuC and LeuD. Requires [4Fe-4S] cluster as cofactor.

The enzyme catalyses (2R,3S)-3-isopropylmalate = (2S)-2-isopropylmalate. The protein operates within amino-acid biosynthesis; L-leucine biosynthesis; L-leucine from 3-methyl-2-oxobutanoate: step 2/4. Catalyzes the isomerization between 2-isopropylmalate and 3-isopropylmalate, via the formation of 2-isopropylmaleate. The protein is 3-isopropylmalate dehydratase large subunit of Serratia proteamaculans (strain 568).